Reading from the N-terminus, the 201-residue chain is Small ribosomal subunit protein uS4c (201 aa).

A disordered region spans residues 19-38 (PGLTSKSPKAGSDLRNQLRS). Residues 89-149 (MRLDNILFRL…DEQKSRALIQ (61 aa)) form the S4 RNA-binding domain.

It belongs to the universal ribosomal protein uS4 family. As to quaternary structure, part of the 30S ribosomal subunit. Contacts protein S5. The interaction surface between S4 and S5 is involved in control of translational fidelity.

The protein localises to the plastid. It localises to the chloroplast. One of the primary rRNA binding proteins, it binds directly to 16S rRNA where it nucleates assembly of the body of the 30S subunit. Its function is as follows. With S5 and S12 plays an important role in translational accuracy. This Platanus occidentalis (Sycamore) protein is Small ribosomal subunit protein uS4c (rps4).